The primary structure comprises 391 residues: NAD(P)H-quinone oxidoreductase subunit H, chloroplastic (391 aa).

This sequence belongs to the complex I 49 kDa subunit family. In terms of assembly, NDH is composed of at least 16 different subunits, 5 of which are encoded in the nucleus.

The protein localises to the plastid. The protein resides in the chloroplast thylakoid membrane. The enzyme catalyses a plastoquinone + NADH + (n+1) H(+)(in) = a plastoquinol + NAD(+) + n H(+)(out). It carries out the reaction a plastoquinone + NADPH + (n+1) H(+)(in) = a plastoquinol + NADP(+) + n H(+)(out). Functionally, NDH shuttles electrons from NAD(P)H:plastoquinone, via FMN and iron-sulfur (Fe-S) centers, to quinones in the photosynthetic chain and possibly in a chloroplast respiratory chain. The immediate electron acceptor for the enzyme in this species is believed to be plastoquinone. Couples the redox reaction to proton translocation, and thus conserves the redox energy in a proton gradient. The protein is NAD(P)H-quinone oxidoreductase subunit H, chloroplastic of Chaetosphaeridium globosum (Charophycean green alga).